The chain runs to 322 residues: Protease HtpX homolog (322 aa).

Helical transmembrane passes span 19–39 (ILLI…CYLL) and 61–81 (FINL…IAYF). His-165 contacts Zn(2+). Residue Glu-166 is part of the active site. Residue His-169 participates in Zn(2+) binding. 2 helical membrane-spanning segments follow: residues 175–195 (VRLL…AQIA) and 216–236 (ILIL…ATLM). Glu-245 contacts Zn(2+).

It belongs to the peptidase M48B family. The cofactor is Zn(2+).

It localises to the cell inner membrane. This chain is Protease HtpX homolog, found in Bacteroides fragilis (strain ATCC 25285 / DSM 2151 / CCUG 4856 / JCM 11019 / LMG 10263 / NCTC 9343 / Onslow / VPI 2553 / EN-2).